Reading from the N-terminus, the 375-residue chain is DNA replication and repair protein RecF (375 aa).

ATP is bound at residue 30 to 37 (GENAQGKT).

It belongs to the RecF family.

It localises to the cytoplasm. Its function is as follows. The RecF protein is involved in DNA metabolism; it is required for DNA replication and normal SOS inducibility. RecF binds preferentially to single-stranded, linear DNA. It also seems to bind ATP. This chain is DNA replication and repair protein RecF, found in Latilactobacillus sakei subsp. sakei (strain 23K) (Lactobacillus sakei subsp. sakei).